A 451-amino-acid polypeptide reads, in one-letter code: Chromosomal replication initiator protein DnaA (451 aa).

A domain I, interacts with DnaA modulators region spans residues 1-73; it reads MQDNLPQIWE…SNALKQTTSK (73 aa). The interval 73 to 113 is domain II; it reads KNFEIRFIVPSEEKISKTEESQKKLEGSVNISVASDQFVSN. The segment at 114 to 330 is domain III, AAA+ region; it reads NLNPKYTFDT…GALIRIVAYS (217 aa). Residues Gly158, Gly160, Lys161, and Thr162 each contribute to the ATP site. Residues 331 to 451 are domain IV, binds dsDNA; that stretch reads SLTNSEITVE…ERIAKEIKGD (121 aa).

It belongs to the DnaA family. As to quaternary structure, oligomerizes as a right-handed, spiral filament on DNA at oriC.

It localises to the cytoplasm. In terms of biological role, plays an essential role in the initiation and regulation of chromosomal replication. ATP-DnaA binds to the origin of replication (oriC) to initiate formation of the DNA replication initiation complex once per cell cycle. Binds the DnaA box (a 9 base pair repeat at the origin) and separates the double-stranded (ds)DNA. Forms a right-handed helical filament on oriC DNA; dsDNA binds to the exterior of the filament while single-stranded (ss)DNA is stabiized in the filament's interior. The ATP-DnaA-oriC complex binds and stabilizes one strand of the AT-rich DNA unwinding element (DUE), permitting loading of DNA polymerase. After initiation quickly degrades to an ADP-DnaA complex that is not apt for DNA replication. Binds acidic phospholipids. The protein is Chromosomal replication initiator protein DnaA of Alkaliphilus oremlandii (strain OhILAs) (Clostridium oremlandii (strain OhILAs)).